A 790-amino-acid chain; its full sequence is Cadherin-18 (790 aa).

The first 24 residues, M1–G24, serve as a signal peptide directing secretion. Residues T25 to R53 constitute a propeptide that is removed on maturation. N36 carries an N-linked (GlcNAc...) asparagine glycan. Cadherin domains lie at G54–F159, T160–F268, P269–F383, S384–P486, and E487–S608. Residues G54 to S608 lie on the Extracellular side of the membrane. An N-linked (GlcNAc...) asparagine glycan is attached at N255. 2 N-linked (GlcNAc...) asparagine glycosylation sites follow: N455 and N536. A helical membrane pass occupies residues A609–L636. The Cytoplasmic portion of the chain corresponds to R637–T790. S786 carries the phosphoserine modification.

Its subcellular location is the cell membrane. Functionally, cadherins are calcium-dependent cell adhesion proteins. They preferentially interact with themselves in a homophilic manner in connecting cells; cadherins may thus contribute to the sorting of heterogeneous cell types. The sequence is that of Cadherin-18 (CDH18) from Bos taurus (Bovine).